The chain runs to 386 residues: S-(hydroxymethyl)glutathione dehydrogenase (386 aa).

An N-acetylserine modification is found at serine 2. Cysteine 49 lines the Zn(2+) pocket. An NAD(+)-binding site is contributed by histidine 50. Residues histidine 71, glutamate 72, cysteine 101, cysteine 104, cysteine 107, cysteine 115, and cysteine 179 each contribute to the Zn(2+) site. Residues 204 to 209 (GCGTVG), aspartate 228, 300 to 302 (IGV), and 325 to 327 (SAF) each bind NAD(+).

It belongs to the zinc-containing alcohol dehydrogenase family. Class-III subfamily. Zn(2+) is required as a cofactor.

It localises to the cytoplasm. Its subcellular location is the mitochondrion. It catalyses the reaction a primary alcohol + NAD(+) = an aldehyde + NADH + H(+). The catalysed reaction is a secondary alcohol + NAD(+) = a ketone + NADH + H(+). The enzyme catalyses S-(hydroxymethyl)glutathione + NADP(+) = S-formylglutathione + NADPH + H(+). It carries out the reaction S-(hydroxymethyl)glutathione + NAD(+) = S-formylglutathione + NADH + H(+). It catalyses the reaction S-nitrosoglutathione + NADH + H(+) = S-(hydroxysulfenamide)glutathione + NAD(+). Oxidizes long-chain alcohols and, in the presence of glutathione, is able to oxidize formaldehyde. Is responsible for yeast resistance to formaldehyde. Also acts as a S-nitroso-glutathione reductase by catalyzing the NADH-dependent reduction of S-nitrosoglutathione, thereby regulating protein S-nitrosylation. The polypeptide is S-(hydroxymethyl)glutathione dehydrogenase (SFA1) (Saccharomyces cerevisiae (strain ATCC 204508 / S288c) (Baker's yeast)).